The sequence spans 78 residues: Beta sliding clamp (78 aa).

The protein belongs to the beta sliding clamp family. As to quaternary structure, forms a ring-shaped head-to-tail homodimer around DNA which binds and tethers DNA polymerases and other proteins to the DNA. The DNA replisome complex has a single clamp-loading complex (3 tau and 1 each of delta, delta', psi and chi subunits) which binds 3 Pol III cores (1 core on the leading strand and 2 on the lagging strand) each with a beta sliding clamp dimer. Additional proteins in the replisome are other copies of gamma, psi and chi, Ssb, DNA helicase and RNA primase.

It localises to the cytoplasm. Functionally, confers DNA tethering and processivity to DNA polymerases and other proteins. Acts as a clamp, forming a ring around DNA (a reaction catalyzed by the clamp-loading complex) which diffuses in an ATP-independent manner freely and bidirectionally along dsDNA. Initially characterized for its ability to contact the catalytic subunit of DNA polymerase III (Pol III), a complex, multichain enzyme responsible for most of the replicative synthesis in bacteria; Pol III exhibits 3'-5' exonuclease proofreading activity. The beta chain is required for initiation of replication as well as for processivity of DNA replication. The protein is Beta sliding clamp (dnaN) of Serratia marcescens.